Consider the following 450-residue polypeptide: tRNA-2-methylthio-N(6)-dimethylallyladenosine synthase (450 aa).

The region spanning Lys2–Arg119 is the MTTase N-terminal domain. Cys11, Cys48, Cys82, Cys156, Cys160, and Cys163 together coordinate [4Fe-4S] cluster. The Radical SAM core domain occupies Arg142–Arg375. The TRAM domain maps to Gln378–Val448.

Belongs to the methylthiotransferase family. MiaB subfamily. Monomer. It depends on [4Fe-4S] cluster as a cofactor.

The protein localises to the cytoplasm. The enzyme catalyses N(6)-dimethylallyladenosine(37) in tRNA + (sulfur carrier)-SH + AH2 + 2 S-adenosyl-L-methionine = 2-methylsulfanyl-N(6)-dimethylallyladenosine(37) in tRNA + (sulfur carrier)-H + 5'-deoxyadenosine + L-methionine + A + S-adenosyl-L-homocysteine + 2 H(+). Catalyzes the methylthiolation of N6-(dimethylallyl)adenosine (i(6)A), leading to the formation of 2-methylthio-N6-(dimethylallyl)adenosine (ms(2)i(6)A) at position 37 in tRNAs that read codons beginning with uridine. This is tRNA-2-methylthio-N(6)-dimethylallyladenosine synthase from Cupriavidus taiwanensis (strain DSM 17343 / BCRC 17206 / CCUG 44338 / CIP 107171 / LMG 19424 / R1) (Ralstonia taiwanensis (strain LMG 19424)).